A 193-amino-acid polypeptide reads, in one-letter code: BH3-interacting domain death agonist (193 aa).

Residues 87–101 carry the BH3 motif; the sequence is IAAQLAEIGDQLDKQ.

Forms heterodimers either with the pro-apoptotic protein BAX or the anti-apoptotic protein Bcl-2.

The protein localises to the cytoplasm. Its subcellular location is the mitochondrion outer membrane. Its function is as follows. Induces caspases and apoptosis. Counters the protective effect of Bcl-2. The polypeptide is BH3-interacting domain death agonist (BID) (Gallus gallus (Chicken)).